Consider the following 622-residue polypeptide: Gamma tubulin complex adapter SPC72 (622 aa).

Disordered regions lie at residues 1-58 (MVRR…PALM) and 221-263 (DKEE…IHDS). Over residues 228-238 (LAQSSPAGSQL) the composition is skewed to polar residues. Residues 239–250 (ESRDSPSSKEEN) are compositionally biased toward basic and acidic residues.

Homooligomer. Interacts with CDC5, KAR1, KIN4, SPC97, SPC98, STU2 and TUB4. Post-translationally, phosphorylated by CDC5.

It is found in the cytoplasm. The protein resides in the cytoskeleton. Its subcellular location is the microtubule organizing center. It localises to the spindle pole body. Spindle pole body (SPB) component that acts as the gamma-tubulin complex-binding protein of the SPB outer plaque. Anchors cytoplasmic microtubules at the half bridge of the spindle pole body (SPB) and accordingly functions in nuclear position and spindle orientation, including anaphase spindle migration into the bud. Recruits KIN4 kinase to both SPBs when cytoplasmic microtubules are defective, to delay mitotic exit. Links cytoplasmic microtubules with spindle orientation checkpoint (SPOC) components and, therefore, could function as part of the sensors of spindle orientation defects. Required for cytoplasmic astral microtubule growth during mitosis. Is strictly required for mating and karyogamy. This chain is Gamma tubulin complex adapter SPC72 (SPC72), found in Saccharomyces cerevisiae (strain ATCC 204508 / S288c) (Baker's yeast).